Reading from the N-terminus, the 695-residue chain is Putative ATP-dependent RNA helicase L540 (695 aa).

A Helicase ATP-binding domain is found at 53–219 (LSALENYQLV…FNSVDSTVID (167 aa)). 66-73 (SSTGSGKS) is a binding site for ATP. The DEAH box motif lies at 164-167 (DEAH). The 188-residue stretch at 247-434 (LIEDLIHQQI…GINMMNQLMD (188 aa)) folds into the Helicase C-terminal domain.

Belongs to the DEAD box helicase family. DEAH subfamily.

The protein resides in the virion. The enzyme catalyses ATP + H2O = ADP + phosphate + H(+). This is Putative ATP-dependent RNA helicase L540 from Acanthamoeba polyphaga (Amoeba).